Reading from the N-terminus, the 164-residue chain is R-phycoerythrin alpha chain (164 aa).

Residues asparagine 47, lysine 81, cysteine 82, arginine 84, histidine 88, arginine 137, cysteine 139, and arginine 142 each coordinate (2R,3E)-phycoerythrobilin.

Belongs to the phycobiliprotein family. In terms of assembly, heterododecamer of 6 alpha and 6 beta chains. The basic functional unit of phycobiliproteins is a ring-shaped hexamer formed from two back-to-back trimers contacting via the alpha chain subunits. The trimers are composed of alpha/beta subunit heterodimers arranged around a three-fold axis of symmetry. The phycoerythrins also contain a gamma subunit which is located in the center of the hexamer. Contains two covalently linked phycoerythrobilin chromophores.

Its subcellular location is the plastid. It is found in the chloroplast thylakoid membrane. Its function is as follows. Light-harvesting photosynthetic tetrapyrrole chromophore-protein from the phycobiliprotein complex. The protein is R-phycoerythrin alpha chain (rpeA) of Agarophyton chilense (Red seaweed).